Reading from the N-terminus, the 395-residue chain is RNA pseudouridine synthase 7 (395 aa).

Positions 1–21 (MKRKQQEDDNDDGVEKAVSPV) are disordered. Residues 74–136 (KTIVDLFADE…HEPPVMIDDV (63 aa)) enclose the S4 RNA-binding domain. The active site involves D187. Residues 244-255 (EGRSTAEDANSS) are compositionally biased toward polar residues. Residues 244-263 (EGRSTAEDANSSGDDKKVKG) are disordered.

This sequence belongs to the pseudouridine synthase RluA family.

The catalysed reaction is a uridine in RNA = a pseudouridine in RNA. This Arabidopsis thaliana (Mouse-ear cress) protein is RNA pseudouridine synthase 7.